A 357-amino-acid polypeptide reads, in one-letter code: Elongation factor Ts (357 aa).

The tract at residues 82–85 (TDFV) is involved in Mg(2+) ion dislocation from EF-Tu.

The protein belongs to the EF-Ts family.

It is found in the cytoplasm. Functionally, associates with the EF-Tu.GDP complex and induces the exchange of GDP to GTP. It remains bound to the aminoacyl-tRNA.EF-Tu.GTP complex up to the GTP hydrolysis stage on the ribosome. The sequence is that of Elongation factor Ts from Campylobacter jejuni subsp. doylei (strain ATCC BAA-1458 / RM4099 / 269.97).